A 290-amino-acid chain; its full sequence is ATP synthase gamma chain (290 aa).

Belongs to the ATPase gamma chain family. F-type ATPases have 2 components, CF(1) - the catalytic core - and CF(0) - the membrane proton channel. CF(1) has five subunits: alpha(3), beta(3), gamma(1), delta(1), epsilon(1). CF(0) has three main subunits: a, b and c.

It localises to the cell inner membrane. Produces ATP from ADP in the presence of a proton gradient across the membrane. The gamma chain is believed to be important in regulating ATPase activity and the flow of protons through the CF(0) complex. This is ATP synthase gamma chain from Delftia acidovorans (strain DSM 14801 / SPH-1).